Reading from the N-terminus, the 156-residue chain is Small ribosomal subunit protein uS7 (156 aa).

Belongs to the universal ribosomal protein uS7 family. As to quaternary structure, part of the 30S ribosomal subunit. Contacts proteins S9 and S11.

Its function is as follows. One of the primary rRNA binding proteins, it binds directly to 16S rRNA where it nucleates assembly of the head domain of the 30S subunit. Is located at the subunit interface close to the decoding center, probably blocks exit of the E-site tRNA. The sequence is that of Small ribosomal subunit protein uS7 from Shouchella clausii (strain KSM-K16) (Alkalihalobacillus clausii).